A 201-amino-acid polypeptide reads, in one-letter code: Adenylyl-sulfate kinase (201 aa).

Position 35 to 42 (Gly-35 to Ser-42) interacts with ATP. Ser-109 functions as the Phosphoserine intermediate in the catalytic mechanism.

The protein belongs to the APS kinase family.

The catalysed reaction is adenosine 5'-phosphosulfate + ATP = 3'-phosphoadenylyl sulfate + ADP + H(+). Its pathway is sulfur metabolism; hydrogen sulfide biosynthesis; sulfite from sulfate: step 2/3. In terms of biological role, catalyzes the synthesis of activated sulfate. This is Adenylyl-sulfate kinase from Prochlorococcus marinus (strain SARG / CCMP1375 / SS120).